The primary structure comprises 186 residues: Large ribosomal subunit protein eL18B (186 aa).

Position 50 is an N6,N6,N6-trimethyllysine (Lys50). A Glycyl lysine isopeptide (Lys-Gly) (interchain with G-Cter in ubiquitin) cross-link involves residue Lys116.

This sequence belongs to the eukaryotic ribosomal protein eL18 family. Component of the large ribosomal subunit (LSU). Mature yeast ribosomes consist of a small (40S) and a large (60S) subunit. The 40S small subunit contains 1 molecule of ribosomal RNA (18S rRNA) and 33 different proteins (encoded by 57 genes). The large 60S subunit contains 3 rRNA molecules (25S, 5.8S and 5S rRNA) and 46 different proteins (encoded by 81 genes). eL18 interacts with NAP1.

It localises to the cytoplasm. In terms of biological role, component of the ribosome, a large ribonucleoprotein complex responsible for the synthesis of proteins in the cell. The small ribosomal subunit (SSU) binds messenger RNAs (mRNAs) and translates the encoded message by selecting cognate aminoacyl-transfer RNA (tRNA) molecules. The large subunit (LSU) contains the ribosomal catalytic site termed the peptidyl transferase center (PTC), which catalyzes the formation of peptide bonds, thereby polymerizing the amino acids delivered by tRNAs into a polypeptide chain. The nascent polypeptides leave the ribosome through a tunnel in the LSU and interact with protein factors that function in enzymatic processing, targeting, and the membrane insertion of nascent chains at the exit of the ribosomal tunnel. In Saccharomyces cerevisiae (strain ATCC 204508 / S288c) (Baker's yeast), this protein is Large ribosomal subunit protein eL18B.